A 588-amino-acid polypeptide reads, in one-letter code: L-fucose isomerase (588 aa).

Active-site proton acceptor residues include glutamate 335 and aspartate 359. Residues glutamate 335, aspartate 359, and histidine 525 each contribute to the Mn(2+) site.

The protein belongs to the L-fucose isomerase family. The cofactor is Mn(2+).

The protein resides in the cytoplasm. It carries out the reaction L-fucose = L-fuculose. It participates in carbohydrate degradation; L-fucose degradation; L-lactaldehyde and glycerone phosphate from L-fucose: step 1/3. Converts the aldose L-fucose into the corresponding ketose L-fuculose. The protein is L-fucose isomerase of Streptococcus pneumoniae (strain 70585).